The chain runs to 482 residues: Complement C1r subcomponent-like protein (482 aa).

Residues 1 to 43 form the signal peptide; the sequence is MSGFRGLVPELENSLWSSPTTSCMSKMCWWLLWGILHTCPTQA. One can recognise a CUB domain in the interval 44 to 166; it reads SVLLAQQSPQ…KGFLALYQAV (123 aa). 2 disulfides stabilise this stretch: Cys97–Cys115 and Cys190–Cys223. The Sushi domain occupies 166–225; that stretch reads VAVNQPNGDTEAVTTPGAPKIQNHCQDPYYKADQTGTLSCPSSWKWKDRQDGGEVPECVP. Residues 240–479 enclose the Peptidase S1 domain; the sequence is TFGSSRAKLG…YMDWIKRVIE (240 aa). Residues His278 and Asp334 each act as charge relay system in the active site. Asn358 carries N-linked (GlcNAc...) asparagine glycosylation. 2 cysteine pairs are disulfide-bonded: Cys397/Cys416 and Cys427/Cys457. Ser431 acts as the Charge relay system in catalysis.

The protein belongs to the peptidase S1 family. In terms of tissue distribution, expressed in liver (at protein level).

The protein localises to the secreted. Functionally, mediates the proteolytic cleavage of HP/haptoglobin in the endoplasmic reticulum. This Mus musculus (Mouse) protein is Complement C1r subcomponent-like protein (C1rl).